The primary structure comprises 319 residues: Probable arabinan endo-1,5-alpha-L-arabinosidase C (319 aa).

A signal peptide spans 1–16 (MFVYTLIFLFLAAANA). Asp-31 functions as the Proton acceptor in the catalytic mechanism. An N-linked (GlcNAc...) asparagine glycan is attached at Asn-190. Residue Glu-198 is the Proton donor of the active site. An N-linked (GlcNAc...) asparagine glycan is attached at Asn-222.

This sequence belongs to the glycosyl hydrolase 43 family.

The protein localises to the secreted. It catalyses the reaction Endohydrolysis of (1-&gt;5)-alpha-arabinofuranosidic linkages in (1-&gt;5)-arabinans.. It participates in glycan metabolism; L-arabinan degradation. Functionally, endo-1,5-alpha-L-arabinanase involved in degradation of pectin. Its preferred substrate is linear 1,5-alpha-L-arabinan. This chain is Probable arabinan endo-1,5-alpha-L-arabinosidase C (abnC), found in Aspergillus clavatus (strain ATCC 1007 / CBS 513.65 / DSM 816 / NCTC 3887 / NRRL 1 / QM 1276 / 107).